Consider the following 608-residue polypeptide: Elongation factor 4 (608 aa).

Positions 11–193 constitute a tr-type G domain; it reads KKIRNFSIIA…QIVEKVPEPS (183 aa). GTP contacts are provided by residues 23-28 and 140-143; these read DHGKST and NKID.

The protein belongs to the TRAFAC class translation factor GTPase superfamily. Classic translation factor GTPase family. LepA subfamily.

The protein resides in the cell membrane. It carries out the reaction GTP + H2O = GDP + phosphate + H(+). Its function is as follows. Required for accurate and efficient protein synthesis under certain stress conditions. May act as a fidelity factor of the translation reaction, by catalyzing a one-codon backward translocation of tRNAs on improperly translocated ribosomes. Back-translocation proceeds from a post-translocation (POST) complex to a pre-translocation (PRE) complex, thus giving elongation factor G a second chance to translocate the tRNAs correctly. Binds to ribosomes in a GTP-dependent manner. The chain is Elongation factor 4 from Listeria monocytogenes serotype 4b (strain CLIP80459).